The following is a 919-amino-acid chain: Eukaryotic translation initiation factor 3 subunit C (919 aa).

The interval M1–A28 is disordered. Acidic residues predominate over residues S11 to V20. Phosphoserine is present on residues S34, S165, and S177. The segment at L154–A275 is disordered. Residues Q162–E171 are compositionally biased toward acidic residues. Residues A210–N236 are compositionally biased toward acidic residues. Over residues M241 to I269 the composition is skewed to basic and acidic residues. Positions F640–P816 constitute a PCI domain. The tract at residues F848–E919 is disordered. The segment covering Q883–N894 has biased composition (basic residues). A compositionally biased stretch (low complexity) spans Q895–E919.

It belongs to the eIF-3 subunit C family. Component of the eukaryotic translation initiation factor 3 (eIF-3) complex. The eIF-3 complex interacts with pix.

Its subcellular location is the cytoplasm. Component of the eukaryotic translation initiation factor 3 (eIF-3) complex, which is involved in protein synthesis of a specialized repertoire of mRNAs and, together with other initiation factors, stimulates binding of mRNA and methionyl-tRNAi to the 40S ribosome. The eIF-3 complex specifically targets and initiates translation of a subset of mRNAs involved in cell proliferation. This chain is Eukaryotic translation initiation factor 3 subunit C, found in Drosophila willistoni (Fruit fly).